The primary structure comprises 254 residues: NAD-dependent protein deacetylase 1 (254 aa).

The Deacetylase sirtuin-type domain maps to 5–254 (ASDLRSGVER…GETLGPFVGN (250 aa)). NAD(+) contacts are provided by Ala-31, Thr-35, Phe-42, Arg-43, Gln-108, Ile-110, Asp-111, and His-128. Phe-42 is a nicotinamide binding site. 2 residues coordinate nicotinamide: Ile-110 and Asp-111. His-128 functions as the Proton acceptor in the catalytic mechanism. Zn(2+)-binding residues include Cys-136, Cys-139, Cys-160, and Cys-163. NAD(+) contacts are provided by Ser-201, Ser-202, Asn-226, Asp-243, and Ile-244.

The protein belongs to the sirtuin family. Class U subfamily. Zn(2+) serves as cofactor.

It is found in the cytoplasm. It carries out the reaction N(6)-acetyl-L-lysyl-[protein] + NAD(+) + H2O = 2''-O-acetyl-ADP-D-ribose + nicotinamide + L-lysyl-[protein]. Its function is as follows. NAD-dependent protein deacetylase which modulates the activities of several enzymes which are inactive in their acetylated form. The chain is NAD-dependent protein deacetylase 1 from Bradyrhizobium diazoefficiens (strain JCM 10833 / BCRC 13528 / IAM 13628 / NBRC 14792 / USDA 110).